The primary structure comprises 248 residues: PF03932 family protein CutC (248 aa).

This sequence belongs to the CutC family. As to quaternary structure, homodimer.

The protein resides in the cytoplasm. This Escherichia coli O81 (strain ED1a) protein is PF03932 family protein CutC.